The chain runs to 230 residues: Ribose-5-phosphate isomerase A (230 aa).

Substrate is bound by residues T29–T32, D85–D88, and K99–G102. E108 serves as the catalytic Proton acceptor. K126 lines the substrate pocket.

It belongs to the ribose 5-phosphate isomerase family. As to quaternary structure, homodimer.

The enzyme catalyses aldehydo-D-ribose 5-phosphate = D-ribulose 5-phosphate. The protein operates within carbohydrate degradation; pentose phosphate pathway; D-ribose 5-phosphate from D-ribulose 5-phosphate (non-oxidative stage): step 1/1. Catalyzes the reversible conversion of ribose-5-phosphate to ribulose 5-phosphate. This Synechococcus sp. (strain JA-3-3Ab) (Cyanobacteria bacterium Yellowstone A-Prime) protein is Ribose-5-phosphate isomerase A.